Here is a 512-residue protein sequence, read N- to C-terminus: MTNNPPSAQIKPGEYGFPLKLKARYDNFIGGEWVAPADGEYYQNLTPVTGQLLCEVASSGKRDIDLALDAAHKVKDKWAHTSVQDRAAILFKIADRMEQNLELLATAETWDNGKPIRETSAADVPLAIDHFRYFASCIRAQEGGISEVDSETVAYHFHEPLGVVGQIIPWNFPLLMASWKMAPALAAGNCVVLKPARLTPLSVLLLMEIVGDLLPPGVVNVVNGAGGVIGEYLATSKRIAKVAFTGSTEVGQQIMQYATQNIIPVTLELGGKSPNIFFADVMDEEDAFFDKALEGFALFAFNQGEVCTCPSRALVQESIYERFMERAIRRVESIRSGNPLDSVTQMGAQVSHGQLETILNYIDIGKKEGADVLTGGRRKLLEGELKDGYYLEPTILFGQNNMRVFQEEIFGPVLAVTTFKTMEEALELANDTQYGLGAGVWSRNGNLAYKMGRGIQAGRVWTNCYHAYPAHAAFGGYKQSGIGRETHKMMLEHYQQTKCLLVSYSDKPLGLF.

Catalysis depends on residues Glu-268 and Cys-307.

As to quaternary structure, homotetramer.

It carries out the reaction an aldehyde + NADP(+) + H2O = a carboxylate + NADPH + 2 H(+). The enzyme catalyses acetaldehyde + NADP(+) + H2O = acetate + NADPH + 2 H(+). The catalysed reaction is chloroacetaldehyde + NADP(+) + H2O = chloroacetate + NADPH + 2 H(+). It catalyses the reaction propanal + NADP(+) + H2O = propanoate + NADPH + 2 H(+). Its activity is regulated as follows. Magnesium increases enzyme activity with various substrates. Its function is as follows. Catalyzes the NADP(+)-dependent oxidation of diverse aldehydes to their corresponding carboxylic acids, with a preference for acetaldehyde and chloroacetaldehyde. May play a role in detoxifying aldehydes present during stationary phase. Cannot use NAD(+) instead of NADP(+) as the electron acceptor. To a lesser extent is also able to oxidize propionaldehyde (propanal), benzaldehyde, mafosfamide, and 4-hydroperoxycyclophosphamide. Does not use either glyceraldehyde or glycolaldehyde as substrates. This chain is Aldehyde dehydrogenase B, found in Escherichia coli (strain K12).